The chain runs to 565 residues: NAD-dependent malic enzyme (565 aa).

The active-site Proton donor is the Tyr-104. Arg-157 serves as a coordination point for NAD(+). Lys-175 acts as the Proton acceptor in catalysis. A divalent metal cation contacts are provided by Glu-246, Asp-247, and Asp-270. The NAD(+) site is built by Asp-270 and Asn-418.

It belongs to the malic enzymes family. As to quaternary structure, homotetramer. Mg(2+) is required as a cofactor. Requires Mn(2+) as cofactor.

It carries out the reaction (S)-malate + NAD(+) = pyruvate + CO2 + NADH. The catalysed reaction is oxaloacetate + H(+) = pyruvate + CO2. In Pectobacterium carotovorum subsp. carotovorum (strain PC1), this protein is NAD-dependent malic enzyme.